Consider the following 250-residue polypeptide: Leucyl/phenylalanyl-tRNA--protein transferase (250 aa).

The protein belongs to the L/F-transferase family.

It is found in the cytoplasm. The enzyme catalyses N-terminal L-lysyl-[protein] + L-leucyl-tRNA(Leu) = N-terminal L-leucyl-L-lysyl-[protein] + tRNA(Leu) + H(+). It catalyses the reaction N-terminal L-arginyl-[protein] + L-leucyl-tRNA(Leu) = N-terminal L-leucyl-L-arginyl-[protein] + tRNA(Leu) + H(+). It carries out the reaction L-phenylalanyl-tRNA(Phe) + an N-terminal L-alpha-aminoacyl-[protein] = an N-terminal L-phenylalanyl-L-alpha-aminoacyl-[protein] + tRNA(Phe). Functionally, functions in the N-end rule pathway of protein degradation where it conjugates Leu, Phe and, less efficiently, Met from aminoacyl-tRNAs to the N-termini of proteins containing an N-terminal arginine or lysine. The protein is Leucyl/phenylalanyl-tRNA--protein transferase of Bordetella avium (strain 197N).